The sequence spans 417 residues: Probable secreted aspartic protease ARB_07536 (417 aa).

A signal peptide spans 1-20 (MRGILILVALGAATIPQASA). In terms of domain architecture, Peptidase A1 spans 42–413 (NTDLVTIGTP…DFEKNRVGLA (372 aa)). N-linked (GlcNAc...) asparagine glycosylation is found at Asn74, Asn91, Asn100, Asn170, Asn276, and Asn314. Cys333 and Cys373 are disulfide-bonded.

The protein belongs to the peptidase A1 family.

The protein resides in the secreted. Functionally, probable secreted aspartic protease that supplies the fungus with nutrient amino acids. May be able to degrade the selected host's proteins involved in the immune defense. This chain is Probable secreted aspartic protease ARB_07536, found in Arthroderma benhamiae (strain ATCC MYA-4681 / CBS 112371) (Trichophyton mentagrophytes).